A 507-amino-acid polypeptide reads, in one-letter code: Glucose-6-phosphate isomerase (507 aa).

Glu-337 (proton donor) is an active-site residue. Residues His-368 and Lys-478 contribute to the active site.

Belongs to the GPI family.

Its subcellular location is the cytoplasm. The catalysed reaction is alpha-D-glucose 6-phosphate = beta-D-fructose 6-phosphate. Its pathway is carbohydrate biosynthesis; gluconeogenesis. The protein operates within carbohydrate degradation; glycolysis; D-glyceraldehyde 3-phosphate and glycerone phosphate from D-glucose: step 2/4. Catalyzes the reversible isomerization of glucose-6-phosphate to fructose-6-phosphate. The polypeptide is Glucose-6-phosphate isomerase (Novosphingobium aromaticivorans (strain ATCC 700278 / DSM 12444 / CCUG 56034 / CIP 105152 / NBRC 16084 / F199)).